The chain runs to 747 residues: Rho GTPase-activating protein 24 (747 aa).

Disordered regions lie at residues 1–20 (MEERCESTESPQGQGRKNTK) and 327–475 (FPKD…GTHS). A PH domain is found at 17–123 (KNTKCGWLRK…WVKSIRRVIW (107 aa)). The Rho-GAP domain occupies 133-327 (QKLEDTVRYE…VMISKHDRLF (195 aa)). 2 stretches are compositionally biased toward polar residues: residues 334-346 (QSKPQDGPNSNNN) and 355-367 (GQLQNKENNNTKE). Phosphoserine occurs at positions 368, 390, 395, 397, 401, 412, 414, and 436. Basic and acidic residues predominate over residues 368–380 (SPVRRCSWDKPES). The segment covering 381 to 404 (PQRSSVDNGSPTALSGSKTNSPRN) has biased composition (polar residues). Positions 431–475 (IVTNGSFSSSNAEGVEKPQTTPNGSLQARRTSSLKSSGTKMGTHS) are enriched in polar residues. T451 is subject to Phosphothreonine. A Phosphoserine modification is found at S494. The interval 581 to 639 (DFYVGNFEDPVLDGPPQDDLSHPGDYENKSDRRSVGGRSSRATSSSDNSETFVGNTSSN) is disordered. Residues 599 to 614 (DLSHPGDYENKSDRRS) are compositionally biased toward basic and acidic residues. Residues 616–629 (GGRSSRATSSSDNS) show a composition bias toward low complexity. Over residues 630 to 639 (ETFVGNTSSN) the composition is skewed to polar residues. A coiled-coil region spans residues 648-728 (SSLKQEMTKQ…KEMEQFFSTF (81 aa)).

As to quaternary structure, interacts with FLNA. Phosphorylated by ROCK, leading to activate the RacGAP activity.

The protein resides in the cytoplasm. The protein localises to the cytoskeleton. It localises to the cell junction. It is found in the adherens junction. Its subcellular location is the focal adhesion. The protein resides in the cell projection. Its function is as follows. Rho GTPase-activating protein involved in cell polarity, cell morphology and cytoskeletal organization. Acts as a GTPase activator for the Rac-type GTPase by converting it to an inactive GDP-bound state. Controls actin remodeling by inactivating Rac downstream of Rho leading to suppress leading edge protrusion and promotes cell retraction to achieve cellular polarity. Able to suppress RAC1 and CDC42 activity in vitro. Overexpression induces cell rounding with partial or complete disruption of actin stress fibers and formation of membrane ruffles, lamellipodia, and filopodia. Isoform 2 is a vascular cell-specific GAP involved in modulation of angiogenesis. The polypeptide is Rho GTPase-activating protein 24 (Arhgap24) (Mus musculus (Mouse)).